A 794-amino-acid chain; its full sequence is Cadherin-12 (794 aa).

A signal peptide spans 1–23; that stretch reads MLTRNCLSLLLWVLFDGGLLTPL. The propeptide occupies 24–54; sequence QPQPQQTLATEPRENVIHLPGQRSHFQRVKR. 5 consecutive Cadherin domains span residues 55 to 160, 161 to 269, 270 to 384, 385 to 487, and 488 to 609; these read GWVW…EPKF, LDGP…PPRF, PKSI…PPVF, SKPL…EFPP, and EISV…IFLP. At 55–609 the chain is on the extracellular side; sequence GWVWNQFFVL…SCNVEAIFLP (555 aa). The N-linked (GlcNAc...) asparagine glycan is linked to asparagine 256. Residues asparagine 456, asparagine 537, and asparagine 545 are each glycosylated (N-linked (GlcNAc...) asparagine). Residues 610–637 form a helical membrane-spanning segment; sequence VGLSTGALIAILLCIVILLAIVVLYVAL. Over 638 to 794 the chain is Cytoplasmic; it reads RRQKKKDTLM…EESYNPDKVT (157 aa). Phosphoserine is present on serine 787.

As to expression, brain.

The protein localises to the cell membrane. In terms of biological role, cadherins are calcium-dependent cell adhesion proteins. They preferentially interact with themselves in a homophilic manner in connecting cells; cadherins may thus contribute to the sorting of heterogeneous cell types. This is Cadherin-12 (CDH12) from Homo sapiens (Human).